Here is a 241-residue protein sequence, read N- to C-terminus: Small ribosomal subunit protein uS5 (241 aa).

A disordered region spans residues 1–53 (MSDNEKETQVAEETQNTQAAAESNNEDRKSRRGQRGEGRRGERRNRREESHEN). Positions 11–22 (AEETQNTQAAAE) are enriched in low complexity. Over residues 25-53 (NEDRKSRRGQRGEGRRGERRNRREESHEN) the composition is skewed to basic and acidic residues. The S5 DRBM domain occupies 55–118 (MLDRVVTINR…LDAKKHMFTV (64 aa)).

The protein belongs to the universal ribosomal protein uS5 family. Part of the 30S ribosomal subunit. Contacts proteins S4 and S8.

With S4 and S12 plays an important role in translational accuracy. Functionally, located at the back of the 30S subunit body where it stabilizes the conformation of the head with respect to the body. The polypeptide is Small ribosomal subunit protein uS5 (Bifidobacterium adolescentis (strain ATCC 15703 / DSM 20083 / NCTC 11814 / E194a)).